A 1853-amino-acid polypeptide reads, in one-letter code: Cellulosomal-scaffolding protein A (1853 aa).

An N-terminal signal peptide occupies residues 1–28; the sequence is MRKVISMLLVVAMLTTIFAAMIPQTVSA. 2 Cohesin domains span residues 29-182 and 183-322; these read ATMT…VPSD and GVVV…VNVG. Linker (Pro/Thr-rich) stretches follow at residues 323-363 and 523-559; these read NATP…PANT and GGSVVPSTQPVTTPPATTKPPATTKPPATTIPPSDDP. A compositionally biased stretch (low complexity) spans 323-364; that stretch reads NATPTKGATPTNTATPTKSATATPTRPSVPTNTPTNTPANTP. Disordered stretches follow at residues 323–367 and 525–559; these read NATP…PVSG and SVVPSTQPVTTPPATTKPPATTKPPATTIPPSDDP. The CBM3 domain occupies 365–523; the sequence is VSGNLKVEFY…GVLVWGKEPG (159 aa). A compositionally biased stretch (low complexity) spans 525–555; sequence SVVPSTQPVTTPPATTKPPATTKPPATTIPP. Cohesin domains lie at 560–704, 724–866, 889–1031, 1054–1196, 1219–1361, 1384–1526, and 1548–1690; these read NAIK…NVGD, AVRI…VNVG, and KLTL…VLVT. The Dockerin domain maps to 1785-1852; sequence IMMWVGDIVK…FGATSSDYDA (68 aa).

Post-translationally, O-glycosylated on most but not all Thr residues of the linker units. The reducing sugar is galactopyranose.

It localises to the secreted. In terms of biological role, acts as a scaffolding protein in the cellulosome. It promotes binding of cellulose to the catalytic domains of the cellulolytic enzymes. This chain is Cellulosomal-scaffolding protein A (cipA), found in Acetivibrio thermocellus (strain ATCC 27405 / DSM 1237 / JCM 9322 / NBRC 103400 / NCIMB 10682 / NRRL B-4536 / VPI 7372) (Clostridium thermocellum).